The sequence spans 529 residues: Mannuronan C5-epimerase (529 aa).

Residues 1–30 form the signal peptide; sequence MGACAMNPQALKGSAMLAAAMLLASGAAMA. 6 PbH1 repeats span residues 229-256, 291-313, 315-338, 340-362, 364-386, and 387-409; these read GTET…SISQ, TTGF…DPHD, SHGL…IISR, VNDS…VLDR, SVNN…TLYE, and SGDN…RVRN. The active-site Proton acceptor is the His-312.

Belongs to the D-mannuronate C5-epimerase family.

It localises to the periplasm. The enzyme catalyses [(1-&gt;4)-beta-D-mannuronosyl](n) = [alginate](n). It functions in the pathway glycan biosynthesis; alginate biosynthesis. Catalyzes the epimerization of beta-D-mannuronate to alpha-L-guluronate during the synthesis of the linear polysaccharide alginate. In addition, is part of a periplasmic protein complex that protects alginate from degradation by AlgL by channeling the newly formed alginate polymer through a scaffold that transfers the alginate polymer through the periplasmic space to the outer membrane secretin AlgE. The polypeptide is Mannuronan C5-epimerase (Pseudomonas fluorescens).